A 695-amino-acid polypeptide reads, in one-letter code: Polyribonucleotide nucleotidyltransferase (695 aa).

Positions 486 and 492 each coordinate Mg(2+). The 60-residue stretch at 553–612 (PRIETMQINTSKIATVIGPGGKQIRQIIERSGAQVDINDDGVINIAASTQESINKAKELI) folds into the KH domain. The 69-residue stretch at 622–690 (GKVYNGRVTS…EKGQLKLSHK (69 aa)) folds into the S1 motif domain.

The protein belongs to the polyribonucleotide nucleotidyltransferase family. It depends on Mg(2+) as a cofactor.

It is found in the cytoplasm. It carries out the reaction RNA(n+1) + phosphate = RNA(n) + a ribonucleoside 5'-diphosphate. Its function is as follows. Involved in mRNA degradation. Catalyzes the phosphorolysis of single-stranded polyribonucleotides processively in the 3'- to 5'-direction. The sequence is that of Polyribonucleotide nucleotidyltransferase from Chlamydia trachomatis serovar A (strain ATCC VR-571B / DSM 19440 / HAR-13).